Here is a 583-residue protein sequence, read N- to C-terminus: NudC domain-containing protein 1 (583 aa).

Serine 8 carries the phosphoserine modification. A CS domain is found at 273–361 (IKEPLYYWQQ…NEGLTWPELV (89 aa)). Serine 388 carries the post-translational modification Phosphoserine.

Isoform 1 is specifically expressed in leukemias and a variety of solid tumor cell lines and is also detected in testis and heart. Isoform 2 is predominantly expressed in testis and weakly expressed in tumor cells.

The protein resides in the cytoplasm. Its subcellular location is the nucleus. The protein is NudC domain-containing protein 1 of Homo sapiens (Human).